Consider the following 156-residue polypeptide: Phosphopantetheine adenylyltransferase (156 aa).

The protein belongs to the eukaryotic CoaD family.

It localises to the cytoplasm. It carries out the reaction (R)-4'-phosphopantetheine + ATP + H(+) = 3'-dephospho-CoA + diphosphate. Its pathway is cofactor biosynthesis; coenzyme A biosynthesis. Reversibly transfers an adenylyl group from ATP to 4'-phosphopantetheine, yielding dephospho-CoA (dPCoA) and pyrophosphate. The sequence is that of Phosphopantetheine adenylyltransferase from Methanosarcina acetivorans (strain ATCC 35395 / DSM 2834 / JCM 12185 / C2A).